A 314-amino-acid polypeptide reads, in one-letter code: MAAALSQGGTAITMKALLEAGVHFGHQTKRWNPKMKPFIFGARNGIYIIDLQKTVGLARNALRFVSDSVAKGGSVLFVGTKKQAQDAIREEASRSGQFFVTNRWLGGTLTNFKTVKQGIDRLKTIEKMAADGTYERLPKKEVAQLEREREKLEKNLGGIKELSRLPSALFVIDTKKEHIAVHEANRLGIPVVAVVDTNCDPEGIDYVIPGNDDAIRSIRLFTGKVAEACIEGKGRYSAWVAEHGGHDERREQEDRDAASERGHKDRRDRRDRRGGPRERREPREDRAAASANVEVVRKGEVAPAAAPEAAPAKE.

Basic and acidic residues-rich tracts occupy residues 244–265 (GGHD…GHKD) and 271–287 (DRRG…EDRA). Positions 244–314 (GGHDERREQE…AAPEAAPAKE (71 aa)) are disordered. Residues 302 to 314 (APAAAPEAAPAKE) show a composition bias toward low complexity.

The protein belongs to the universal ribosomal protein uS2 family.

This chain is Small ribosomal subunit protein uS2, found in Anaeromyxobacter dehalogenans (strain 2CP-C).